Consider the following 577-residue polypeptide: Outer spore wall assembly protein SHE10 (577 aa).

The signal sequence occupies residues 1–23 (MGKLIKLITTLTVLVSLLQYCCE). Coiled-coil stretches lie at residues 379 to 416 (NETR…ENVE) and 513 to 561 (ILRS…EEDV). Basic and acidic residues predominate over residues 525-545 (RERKERERKEREKAAAEEFQR). A disordered region spans residues 525–577 (RERKERERKEREKAAAEEFQRQQELLLQQEEEDEEDVSYTSTSTITTTTTMTL). Positions 562 to 577 (SYTSTSTITTTTTMTL) are enriched in low complexity.

It belongs to the SHE10 family. Component of the mitochondria-localized RNase mitochondrial RNA-processing (RNase MRP) composed of one single RNA encoded by the NME1 gene and at least 31 proteins. Absent in the nucleus-localized RNase MRP (NuMRP).

Its subcellular location is the mitochondrion. Its function is as follows. Involved in spore wall assembly. May be a component of the mitochondrial RNase MRP (MtMRP), a ribonucleoprotein endoribonuclease involved in the cleaving RNA transcripts to generate primers for DNA replication in mitochondria. The polypeptide is Outer spore wall assembly protein SHE10 (Saccharomyces cerevisiae (strain RM11-1a) (Baker's yeast)).